The following is a 301-amino-acid chain: Glycine--tRNA ligase alpha subunit (301 aa).

Belongs to the class-II aminoacyl-tRNA synthetase family. In terms of assembly, tetramer of two alpha and two beta subunits.

It localises to the cytoplasm. It catalyses the reaction tRNA(Gly) + glycine + ATP = glycyl-tRNA(Gly) + AMP + diphosphate. This chain is Glycine--tRNA ligase alpha subunit, found in Shewanella piezotolerans (strain WP3 / JCM 13877).